The primary structure comprises 279 residues: Inorganic pyrophosphatase (279 aa).

Diphosphate is bound at residue arginine 100. Residues aspartate 132, aspartate 137, and aspartate 169 each contribute to the Mg(2+) site.

It belongs to the PPase family. Mg(2+) serves as cofactor.

The catalysed reaction is diphosphate + H2O = 2 phosphate + H(+). This chain is Inorganic pyrophosphatase (ppa1), found in Dictyostelium discoideum (Social amoeba).